A 154-amino-acid polypeptide reads, in one-letter code: 6,7-dimethyl-8-ribityllumazine synthase (154 aa).

Residues phenylalanine 26, 60–62, and 84–86 contribute to the 5-amino-6-(D-ribitylamino)uracil site; these read ALE and CII. 89–90 provides a ligand contact to (2S)-2-hydroxy-3-oxobutyl phosphate; the sequence is ET. The Proton donor role is filled by histidine 92. Asparagine 117 contacts 5-amino-6-(D-ribitylamino)uracil. Arginine 131 serves as a coordination point for (2S)-2-hydroxy-3-oxobutyl phosphate.

This sequence belongs to the DMRL synthase family.

The enzyme catalyses (2S)-2-hydroxy-3-oxobutyl phosphate + 5-amino-6-(D-ribitylamino)uracil = 6,7-dimethyl-8-(1-D-ribityl)lumazine + phosphate + 2 H2O + H(+). Its pathway is cofactor biosynthesis; riboflavin biosynthesis; riboflavin from 2-hydroxy-3-oxobutyl phosphate and 5-amino-6-(D-ribitylamino)uracil: step 1/2. Functionally, catalyzes the formation of 6,7-dimethyl-8-ribityllumazine by condensation of 5-amino-6-(D-ribitylamino)uracil with 3,4-dihydroxy-2-butanone 4-phosphate. This is the penultimate step in the biosynthesis of riboflavin. The sequence is that of 6,7-dimethyl-8-ribityllumazine synthase from Polaromonas sp. (strain JS666 / ATCC BAA-500).